A 130-amino-acid chain; its full sequence is Calcitonin gene-related peptide 2 (130 aa).

Positions 1–26 (MDFWKFFPFLALSTIWVLCLASSLQA) are cleaved as a signal peptide. A propeptide spanning residues 27–82 (APFRSALESSLDLGTLGDQEKHLLLAALMQDYEQMKARKLEQEEQETKGSRVTAQK) is cleaved from the precursor. A disulfide bond links Cys85 and Cys90. Position 120 is a phenylalanine amide (Phe120). The propeptide occupies 127 to 130 (DLQA).

The protein belongs to the calcitonin family. As to expression, detected in nerve cells of cerebrum, hippocampus and pons/midbrain in newborns, and only in nerve cells of pons/midbrain in adult.

The protein localises to the secreted. CALCB/CGRP2 is a peptide hormone that induces vasodilation mediated by the CALCRL-RAMP1 receptor complex. Dilates a variety of vessels including the coronary, cerebral and systemic vasculature. Its abundance in the CNS also points toward a neurotransmitter or neuromodulator role. This Mus musculus (Mouse) protein is Calcitonin gene-related peptide 2.